Reading from the N-terminus, the 1262-residue chain is Protein stoned-B (1262 aa).

4 consecutive short sequence motifs (NPF) follow at residues 3–5, 19–21, 33–35, and 43–45; these read NPF. The segment at 17–36 is disordered; the sequence is AANPFLMQSEPEPSSDNPFM. Residues 49–189 are disordered; sequence ADDLELGAEP…DVSVDSGSSA (141 aa). The segment covering 50–60 has biased composition (acidic residues); the sequence is DDLELGAEPEA. A compositionally biased stretch (low complexity) spans 101–111; the sequence is PPQSQPQLQSH. The span at 115–124 shows a compositional bias: pro residues; that stretch reads HPPPPRPLVP. Residues 128 to 145 show a composition bias toward polar residues; sequence TQDLISTVSSQLDETSSE. Positions 172 to 189 are enriched in low complexity; that stretch reads DSGLADLLDVSVDSGSSA. Residues 210–212 carry the NPF 5 motif; that stretch reads NPF. Disordered regions lie at residues 225-452 and 474-507; these read VPLP…SPPT and EEMD…NFAP. Residues 233–272 are compositionally biased toward pro residues; the sequence is KQPPRPPPPRPAPPRPAPPGQAAPQRPPPPLAAVNPPPAA. Positions 325–345 are enriched in acidic residues; sequence DLDETIGEGEPPEQEEPDTEQ. A compositionally biased stretch (polar residues) spans 384-401; that stretch reads QVNNMAAPSGTASTQRAT. The span at 417–429 shows a compositional bias: acidic residues; it reads DDEDEPEAMQEPE. The NPF 6 motif lies at 493–495; it reads NPF. A phosphoserine mark is found at Ser-623 and Ser-626. Positions 643–709 are disordered; that stretch reads SGVAPQLAPP…QDTPQTPLYD (67 aa). The NPF 7 signature appears at 673-675; sequence NPF. Residues 728–902 enclose the SHD domain; it reads GWEMQLRQPN…KIPALRERAL (175 aa). Residues 847–1108 form an interaction with Syt region; sequence KEFGSDLKKL…KGIERILGAV (262 aa). The 314-residue stretch at 906 to 1219 folds into the MHD domain; it reads MEEVQVTAVD…ARHEYKVGIE (314 aa). The tract at residues 1226–1262 is disordered; the sequence is TNAYLAATRPIREEPPTTATKPTASPVAPSDSDTDSN. A compositionally biased stretch (low complexity) spans 1241–1254; sequence PTTATKPTASPVAP.

Belongs to the Stoned B family. As to quaternary structure, interacts with the second C2 domain of Syt.

The protein localises to the cytoplasm. The protein resides in the synapse. Its function is as follows. Adapter protein involved in endocytic recycling of synaptic vesicles membranes. May act by mediating the retrieval of synaptotagmin protein Syt from the plasma membrane, thereby facilitating the internalization of multiple synaptic vesicles from the plasma membrane. The sequence is that of Protein stoned-B (stnB) from Drosophila melanogaster (Fruit fly).